The sequence spans 117 residues: UPF0375 protein Y45F10C.2 (117 aa).

Residues 1–20 (MNSFVSTVLLLSVTIALVSG) form the signal peptide.

Belongs to the UPF0375 family. Expressed in the uterine epithelium.

The protein resides in the secreted. Negatively regulates the egg-laying rate by promoting retention of fertilized eggs. The protein is UPF0375 protein Y45F10C.2 of Caenorhabditis elegans.